The chain runs to 249 residues: Nicotinamide/nicotinic acid mononucleotide adenylyltransferase (249 aa).

2 residues coordinate NAD(+): serine 34 and phenylalanine 35. ATP is bound by residues histidine 42 and lysine 75. Threonine 112, glycine 141, aspartate 143, tryptophan 154, arginine 173, and asparagine 204 together coordinate NAD(+). 209-210 is an ATP binding site; that stretch reads SR.

It belongs to the eukaryotic NMN adenylyltransferase family. The cofactor is a divalent metal cation.

It carries out the reaction beta-nicotinamide D-ribonucleotide + ATP + H(+) = diphosphate + NAD(+). The enzyme catalyses nicotinate beta-D-ribonucleotide + ATP + H(+) = deamido-NAD(+) + diphosphate. It participates in cofactor biosynthesis; NAD(+) biosynthesis; deamido-NAD(+) from nicotinate D-ribonucleotide: step 1/1. Its pathway is cofactor biosynthesis; NAD(+) biosynthesis; NAD(+) from nicotinamide D-ribonucleotide: step 1/1. In terms of biological role, catalyzes the formation of NAD(+) from nicotinamide mononucleotide (NMN) and ATP. Can also use the deamidated form; nicotinic acid mononucleotide (NaMN) as substrate. The chain is Nicotinamide/nicotinic acid mononucleotide adenylyltransferase from Oryza sativa subsp. japonica (Rice).